The following is a 428-amino-acid chain: Histidinol dehydrogenase (428 aa).

3 residues coordinate NAD(+): Y127, Q185, and N208. Substrate is bound by residues S234, Q256, and H259. Residues Q256 and H259 each coordinate Zn(2+). Active-site proton acceptor residues include E323 and H324. The substrate site is built by H324, D357, E411, and H416. D357 contacts Zn(2+). Residue H416 participates in Zn(2+) binding.

The protein belongs to the histidinol dehydrogenase family. Zn(2+) is required as a cofactor.

It catalyses the reaction L-histidinol + 2 NAD(+) + H2O = L-histidine + 2 NADH + 3 H(+). It participates in amino-acid biosynthesis; L-histidine biosynthesis; L-histidine from 5-phospho-alpha-D-ribose 1-diphosphate: step 9/9. Its function is as follows. Catalyzes the sequential NAD-dependent oxidations of L-histidinol to L-histidinaldehyde and then to L-histidine. This Mannheimia succiniciproducens (strain KCTC 0769BP / MBEL55E) protein is Histidinol dehydrogenase.